A 459-amino-acid polypeptide reads, in one-letter code: Zinc finger protein 213 (459 aa).

Positions 45 to 126 (RQRFRQFCYG…VALVEDLQKQ (82 aa)) constitute an SCAN box domain. Residues 128–188 (VKAWRQDVPS…ALLKEGRPGE (61 aa)) form a disordered region. One can recognise a KRAB domain in the interval 202-292 (VALGDIPFYF…ENRPRAALGP (91 aa)). C2H2-type zinc fingers lie at residues 317 to 339 (HSCG…QRTH), 345 to 367 (HKCP…QGVH), 373 to 395 (FSCS…QRIH), 401 to 423 (FGCS…RRVH), and 429 to 451 (FGCG…QSLH).

This sequence belongs to the krueppel C2H2-type zinc-finger protein family. Widely expressed with highest levels in testis.

The protein localises to the nucleus. In terms of biological role, may be involved in transcriptional regulation. The polypeptide is Zinc finger protein 213 (ZNF213) (Homo sapiens (Human)).